Consider the following 203-residue polypeptide: Ribosome-binding factor A (203 aa).

Basic and acidic residues predominate over residues 119 to 141; it reads LAEVRRDARPAGDEDPYRRPRTV. The interval 119-203 is disordered; the sequence is LAEVRRDARP…SPGGDPTAGR (85 aa). Acidic residues predominate over residues 142–169; it reads DEDDEDEDEDLVDEFDEFDRVEELDADA.

Belongs to the RbfA family. Monomer. Binds 30S ribosomal subunits, but not 50S ribosomal subunits or 70S ribosomes.

Its subcellular location is the cytoplasm. One of several proteins that assist in the late maturation steps of the functional core of the 30S ribosomal subunit. Associates with free 30S ribosomal subunits (but not with 30S subunits that are part of 70S ribosomes or polysomes). Required for efficient processing of 16S rRNA. May interact with the 5'-terminal helix region of 16S rRNA. In Frankia alni (strain DSM 45986 / CECT 9034 / ACN14a), this protein is Ribosome-binding factor A.